Consider the following 512-residue polypeptide: Protein spinster homolog 3 (512 aa).

Residues M1–P30 form a disordered region. 12 helical membrane-spanning segments follow: residues V50–L70, G84–L104, A112–S132, I145–F165, V173–S193, W204–V224, F260–W280, L309–A329, L343–T365, G377–V397, V411–L431, and F450–Y470. Residues P481 to P512 are disordered.

This sequence belongs to the major facilitator superfamily. Spinster (TC 2.A.1.49) family.

It localises to the membrane. Functionally, sphingolipid transporter. In Homo sapiens (Human), this protein is Protein spinster homolog 3 (SPNS3).